Consider the following 127-residue polypeptide: Protein ApaG (127 aa).

An ApaG domain is found at 3-127 (DDPRYRVEVE…FVLSVPRTLH (125 aa)).

This chain is Protein ApaG, found in Xanthomonas oryzae pv. oryzae (strain MAFF 311018).